A 361-amino-acid chain; its full sequence is S-adenosylmethionine decarboxylase proenzyme (361 aa).

Catalysis depends on residues E13 and E16. The Schiff-base intermediate with substrate; via pyruvic acid role is filled by S73. A Pyruvic acid (Ser); by autocatalysis modification is found at S73. C87 acts as the Proton donor; for catalytic activity in catalysis. Residues S236 and H249 each act as proton acceptor; for processing activity in the active site.

The protein belongs to the eukaryotic AdoMetDC family. Pyruvate is required as a cofactor. Is synthesized initially as an inactive proenzyme. Formation of the active enzyme involves a self-maturation process in which the active site pyruvoyl group is generated from an internal serine residue via an autocatalytic post-translational modification. Two non-identical subunits are generated from the proenzyme in this reaction, and the pyruvate is formed at the N-terminus of the alpha chain, which is derived from the carboxyl end of the proenzyme. The post-translation cleavage follows an unusual pathway, termed non-hydrolytic serinolysis, in which the side chain hydroxyl group of the serine supplies its oxygen atom to form the C-terminus of the beta chain, while the remainder of the serine residue undergoes an oxidative deamination to produce ammonia and the pyruvoyl group blocking the N-terminus of the alpha chain.

The enzyme catalyses S-adenosyl-L-methionine + H(+) = S-adenosyl 3-(methylsulfanyl)propylamine + CO2. It functions in the pathway amine and polyamine biosynthesis; S-adenosylmethioninamine biosynthesis; S-adenosylmethioninamine from S-adenosyl-L-methionine: step 1/1. This chain is S-adenosylmethionine decarboxylase proenzyme (SAMDC1), found in Nicotiana sylvestris (Wood tobacco).